A 662-amino-acid polypeptide reads, in one-letter code: Protein Aster-C (662 aa).

The interval 1 to 34 is disordered; that stretch reads MEGAPTVRQVMNEGDSSLATELQEDVEENPSPTV. In terms of domain architecture, GRAM spans 69–136; sequence EEYRRQFTHL…KNITFMTKEK (68 aa). Disordered stretches follow at residues 212–237 and 250–284; these read SIED…EKLS and VSET…LPTL. The segment covering 265–276 has biased composition (basic and acidic residues); sequence LGKEESQNEKQT. The VASt domain maps to 326–497; the sequence is HGRLFINRIF…DLLIEESILN (172 aa). Residues 557–577 form a helical membrane-spanning segment; that stretch reads LIVVMSIFVLLLVLLNVTLFL.

It is found in the endoplasmic reticulum membrane. It localises to the cell membrane. Cholesterol transporter that mediates non-vesicular transport of cholesterol from the plasma membrane (PM) to the endoplasmic reticulum (ER). Contains unique domains for binding cholesterol and the PM, thereby serving as a molecular bridge for the transfer of cholesterol from the PM to the ER. Plays a crucial role in cholesterol homeostasis and has the unique ability to localize to the PM based on the level of membrane cholesterol. In lipid-poor conditions localizes to the ER membrane and in response to excess cholesterol in the PM is recruited to the endoplasmic reticulum-plasma membrane contact sites (EPCS) which is mediated by the GRAM domain. At the EPCS, the sterol-binding VASt/ASTER domain binds to the cholesterol in the PM and facilitates its transfer from the PM to ER. This chain is Protein Aster-C (GRAMD1C), found in Pongo abelii (Sumatran orangutan).